The sequence spans 205 residues: Guanylate kinase (205 aa).

The Guanylate kinase-like domain maps to 5 to 184 (GLLIVLSGPS…AVQKIKGIVE (180 aa)). Residue 12 to 19 (GPSGVGKG) participates in ATP binding.

The protein belongs to the guanylate kinase family.

It localises to the cytoplasm. The enzyme catalyses GMP + ATP = GDP + ADP. Essential for recycling GMP and indirectly, cGMP. This chain is Guanylate kinase, found in Listeria innocua serovar 6a (strain ATCC BAA-680 / CLIP 11262).